We begin with the raw amino-acid sequence, 209 residues long: Small ribosomal subunit protein uS4 (209 aa).

Residues 23–46 (SRNPLLKKPHPPGQHGMQRKKKSD) form a disordered region. One can recognise an S4 RNA-binding domain in the interval 93-153 (CRLDNMVYRM…EKSKRLQSVK (61 aa)).

Belongs to the universal ribosomal protein uS4 family. In terms of assembly, part of the 30S ribosomal subunit. Contacts protein S5. The interaction surface between S4 and S5 is involved in control of translational fidelity.

One of the primary rRNA binding proteins, it binds directly to 16S rRNA where it nucleates assembly of the body of the 30S subunit. Functionally, with S5 and S12 plays an important role in translational accuracy. This is Small ribosomal subunit protein uS4 from Chlamydia pneumoniae (Chlamydophila pneumoniae).